A 926-amino-acid polypeptide reads, in one-letter code: Taz1-interacting factor 1 (926 aa).

Coiled coils occupy residues 461–496 and 548–671; these read REAVSNTVQANNSLHEKLAMYQNRCNNLEAMLSHQN and SFTD…LKQK. At S548 the chain carries Phosphoserine. Residue T550 is modified to Phosphothreonine. Phosphoserine is present on S552.

It belongs to the ATG11 family. As to quaternary structure, homodimer and potential homooligomers. Interacts with taz1.

It localises to the preautophagosomal structure membrane. The protein resides in the vacuole membrane. Involved in cytoplasm to vacuole transport (Cvt), pexophagy, mitophagy and nucleophagy. Recruits mitochondria for their selective degradation via autophagy (mitophagy) during starvation. Works as scaffold proteins that recruit ATG proteins to the preautophagosome (PAS), the site of vesicle/autophagosome formation. Required for atg9 anterograde transport from the mitochondria to the PAS. Required for nitrogen starvation-induced sexual development and for entering the dormant G0 state. This is Taz1-interacting factor 1 (taf1) from Schizosaccharomyces pombe (strain 972 / ATCC 24843) (Fission yeast).